Reading from the N-terminus, the 124-residue chain is Small ribosomal subunit protein uS12 (124 aa).

Asp-89 bears the 3-methylthioaspartic acid mark.

It belongs to the universal ribosomal protein uS12 family. In terms of assembly, part of the 30S ribosomal subunit. Contacts proteins S8 and S17. May interact with IF1 in the 30S initiation complex.

In terms of biological role, with S4 and S5 plays an important role in translational accuracy. Functionally, interacts with and stabilizes bases of the 16S rRNA that are involved in tRNA selection in the A site and with the mRNA backbone. Located at the interface of the 30S and 50S subunits, it traverses the body of the 30S subunit contacting proteins on the other side and probably holding the rRNA structure together. The combined cluster of proteins S8, S12 and S17 appears to hold together the shoulder and platform of the 30S subunit. The protein is Small ribosomal subunit protein uS12 of Glaesserella parasuis serovar 5 (strain SH0165) (Haemophilus parasuis).